Reading from the N-terminus, the 664-residue chain is Glycine--tRNA ligase beta subunit (664 aa).

Belongs to the class-II aminoacyl-tRNA synthetase family. Tetramer of two alpha and two beta subunits.

It is found in the cytoplasm. The enzyme catalyses tRNA(Gly) + glycine + ATP = glycyl-tRNA(Gly) + AMP + diphosphate. The protein is Glycine--tRNA ligase beta subunit of Rickettsia africae (strain ESF-5).